The chain runs to 305 residues: Tetraspanin-12 (305 aa).

Topologically, residues 1–12 are cytoplasmic; it reads MAREDSVKCLRC. 2 S-palmitoyl cysteine lipidation sites follow: C9 and C12. The chain crosses the membrane as a helical span at residues 13–33; sequence LLYALNLLFWLMSISVLAVSA. The Extracellular segment spans residues 34-59; the sequence is WMRDYLNNVLTLTAETRVEEAVILTY. Residues 60–80 form a helical membrane-spanning segment; that stretch reads FPVVHPVMIAVCCFLIIVGML. At 81–89 the chain is on the cytoplasmic side; it reads GYCGTVKRN. C83 carries S-palmitoyl cysteine lipidation. The chain crosses the membrane as a helical span at residues 90 to 110; it reads LLLLAWYFGTLLVIFCVELAC. Over 111 to 224 the chain is Extracellular; that stretch reads GVWTYEQEVM…RGTKQLQVLR (114 aa). The helical transmembrane segment at 225–245 threads the bilayer; sequence FLGISIGVTQILAMILTITLL. At 246–305 the chain is on the cytoplasmic side; sequence WALYYDRREPGTDQMLSLKNDTSQHLSCHSVELLKPSLSRIFEHTSMANSFNTHFEMEEL.

Belongs to the tetraspanin (TM4SF) family. As to quaternary structure, interacts (when palmitoylated) with ADAM10. Interacts with MMP14/MT1-MMP. Component of a complex, at least composed of TSPAN12, FZD4 and norrin (NDP). In terms of processing, palmitoylated; required for interaction with ADAM10. In terms of tissue distribution, expressed in the neonatal retinal vasculature but not other retinal tissues. Also detected in the neonatal meningeal vasculature and in nonvascular cell types, such as the smooth muscle cells in the neonatal intestine.

The protein resides in the cell membrane. Its function is as follows. Regulator of cell surface receptor signal transduction. Acts as a regulator of membrane proteinases such as ADAM10 and MMP14/MT1-MMP. Activates ADAM10-dependent cleavage activity of amyloid precursor protein (APP). Activates MMP14/MT1-MMP-dependent cleavage activity. Plays a central role in retinal vascularization by regulating norrin (NDP) signal transduction. Acts in concert with norrin (NDP) to promote FZD4 multimerization and subsequent activation of FZD4, leading to promote accumulation of beta-catenin (CTNNB1) and stimulate LEF/TCF-mediated transcriptional programs. Suprisingly, it only activate the norrin (NDP)-dependent activation of FZD4, while it does not activate the Wnt-dependent activation of FZD4, suggesting the existence of a Wnt-independent signaling that also promote accumulation the beta-catenin (CTNNB1). In Mus musculus (Mouse), this protein is Tetraspanin-12 (Tspan12).